A 555-amino-acid chain; its full sequence is Solute carrier family 22 member 2 (555 aa).

Over 1-22 the chain is Cytoplasmic; sequence MPTTVDDVLEHGGEFHFFQKQM. Residues 23-43 form a helical membrane-spanning segment; it reads FFLLALLSATFAPIYVGIVFL. Over 44 to 150 the chain is Extracellular; the sequence is GFTPDHRCRS…LVCANSWMLD (107 aa). N-linked (GlcNAc...) asparagine glycosylation is present at Asn72. A helical transmembrane segment spans residues 151–171; it reads LFQSSVNVGFFIGSMSIGYIA. Residues 172 to 177 are Cytoplasmic-facing; sequence DRFGRK. A helical membrane pass occupies residues 178–198; it reads LCLLTTVLINAAAGVLMAISP. Topologically, residues 199-208 are extracellular; sequence TYTWMLIFRL. Residues 209–229 traverse the membrane as a helical segment; it reads IQGLVSKAGWLIGYILITEFV. Over 230–238 the chain is Cytoplasmic; sequence GRRYRRTVG. The chain crosses the membrane as a helical span at residues 239–259; the sequence is IFYQVAYTVGLLVLAGVAYAL. Over 260-263 the chain is Extracellular; the sequence is PHWR. The chain crosses the membrane as a helical span at residues 264-284; it reads WLQFTVSLPNFFFLLYYWCIP. A Proline-rich sequence motif is present at residues 284–288; sequence PESPR. Over 285 to 348 the chain is Cytoplasmic; it reads ESPRWLISQN…VRTPQIRKHT (64 aa). Residues 349-369 traverse the membrane as a helical segment; the sequence is MILMYNWFTSSVLYQGLIMHM. Over 370 to 375 the chain is Extracellular; that stretch reads GLAGDN. Residues 376–396 form a helical membrane-spanning segment; that stretch reads IYLDFFYSALVEFPAAFMIIL. Residues 397–414 lie on the Cytoplasmic side of the membrane; the sequence is TIDRIGRRYPWAASNMVA. A helical transmembrane segment spans residues 415-435; it reads GAACLASVFIPGDLQWLKIII. Over 436-441 the chain is Extracellular; the sequence is SCLGRM. Residues 442-462 form a helical membrane-spanning segment; that stretch reads GITMAYEIVCLVNAELYPTFI. At 463–464 the chain is on the cytoplasmic side; that stretch reads RN. The chain crosses the membrane as a helical span at residues 465-485; it reads LGVHICSSMCDIGGIITPFLV. Over 486–494 the chain is Extracellular; the sequence is YRLTNIWLE. The chain crosses the membrane as a helical span at residues 495-515; the sequence is LPLMVFGVLGLVAGGLVLLLP. Residues 516–555 are Cytoplasmic-facing; it reads ETKGKALPETIEEAENMQRPRKNKEKMIYLQVQKLDIPLN.

It belongs to the major facilitator (TC 2.A.1) superfamily. Organic cation transporter (TC 2.A.1.19) family. In terms of processing, tyrosine phosphorylated by tyrosine-protein kinase YES1. In terms of tissue distribution, mainly expressed in kidney, in the cortex and medulla. Localized in testis, mostly to peritubular myoid cells and Leydig cells and also detected along the basal membrane of Sertoli cells. Expressed in brain, in neurons of the cerebral cortex and in various subcortical nuclei. In the brain, also detected in the dopaminergic regions of the substantia nigra. Expressed in tracheal and bronchial ciliated epithelium in the respiratory tract. Also detected in secretory phase endometrium, in scattered stromal cells. Expressed in spleen, placenta, small intestine and spinal cord. Weakly expressed in prostate, uterus and lung. Mainly expressed in kidney, bone marrow and testis. Expressed in colon, skeletal muscle, spinal cord, placenta and liver.

It localises to the basolateral cell membrane. It is found in the basal cell membrane. The protein localises to the apical cell membrane. The enzyme catalyses (R)-noradrenaline(out) = (R)-noradrenaline(in). It carries out the reaction (R)-adrenaline(out) = (R)-adrenaline(in). It catalyses the reaction serotonin(out) = serotonin(in). The catalysed reaction is dopamine(out) = dopamine(in). The enzyme catalyses histamine(out) = histamine(in). It carries out the reaction thiamine(in) = thiamine(out). It catalyses the reaction creatinine(in) = creatinine(out). The catalysed reaction is 1-methylnicotinamide(out) = 1-methylnicotinamide(in). The enzyme catalyses guanidine(out) = guanidine(in). It carries out the reaction choline(out) = choline(in). It catalyses the reaction agmatine(out) = agmatine(in). The catalysed reaction is putrescine(out) = putrescine(in). The enzyme catalyses spermidine(in) = spermidine(out). It carries out the reaction tyramine(in) = tyramine(out). It catalyses the reaction L-histidyl-L-proline diketopiperazine(in) = L-histidyl-L-proline diketopiperazine(out). The catalysed reaction is (R)-salsolinol(in) = (R)-salsolinol(out). The enzyme catalyses N-methyl-(R)-salsolinol(in) = N-methyl-(R)-salsolinol(out). It carries out the reaction acetylcholine(in) = acetylcholine(out). It catalyses the reaction prostaglandin F2alpha(out) = prostaglandin F2alpha(in). The catalysed reaction is prostaglandin E2(out) = prostaglandin E2(in). With respect to regulation, tyrosine phosphorylation of the transporter leads to activation of the transport activity. TEA uptake is activated by tyrosine phosphorylation. Inhibited by cGMP, most likely through a cGMP-binding protein that interacts with OCT2. Its function is as follows. Electrogenic voltage-dependent transporter that mediates the transport of a variety of organic cations such as endogenous bioactive amines, cationic drugs and xenobiotics. Functions as a Na(+)-independent, bidirectional uniporter. Cation cellular uptake or release is driven by the electrochemical potential, i.e. membrane potential and concentration gradient. However, may also engage electroneutral cation exchange when saturating concentrations of cation substrates are reached. Predominantly expressed at the basolateral membrane of hepatocytes and proximal tubules and involved in the uptake and disposition of cationic compounds by hepatic and renal clearance from the blood flow. Implicated in monoamine neurotransmitters uptake such as histamine, dopamine, adrenaline/epinephrine, noradrenaline/norepinephrine, serotonin and tyramine, thereby supporting a physiological role in the central nervous system by regulating interstitial concentrations of neurotransmitters. Also capable of transporting dopaminergic neuromodulators cyclo(his-pro), salsolinol and N-methyl-salsolinol, thereby involved in the maintenance of dopaminergic cell integrity in the central nervous system. Mediates the bidirectional transport of acetylcholine (ACh) at the apical membrane of ciliated cell in airway epithelium, thereby playing a role in luminal release of ACh from bronchial epithelium. Also transports guanidine and endogenous monoamines such as vitamin B1/thiamine, creatinine and N-1-methylnicotinamide (NMN). Mediates the uptake and efflux of quaternary ammonium compound choline. Mediates the bidirectional transport of polyamine agmatine and the uptake of polyamines putrescine and spermidine. Able to transport non-amine endogenous compounds such as prostaglandin E2 (PGE2) and prostaglandin F2-alpha (PGF2-alpha). Also involved in the uptake of xenobiotic 4-(4-(dimethylamino)styryl)-N-methylpyridinium (ASP). May contribute to regulate the transport of organic compounds in testis across the blood-testis-barrier. Functionally, in contrast with isoform 1, not able to transport guanidine, creatinine, cimetidine and metformin. In Homo sapiens (Human), this protein is Solute carrier family 22 member 2.